A 300-amino-acid chain; its full sequence is Inosose dehydratase (300 aa).

The protein belongs to the IolE/MocC family. The cofactor is glutathione. It depends on Co(2+) as a cofactor. Mn(2+) serves as cofactor.

It carries out the reaction scyllo-inosose = 3D-3,5/4-trihydroxycyclohexane-1,2-dione + H2O. Functionally, catalyzes the dehydration of inosose (2-keto-myo-inositol, 2KMI or 2,4,6/3,5-pentahydroxycyclohexanone) to 3D-(3,5/4)-trihydroxycyclohexane-1,2-dione (D-2,3-diketo-4-deoxy-epi-inositol). The protein is Inosose dehydratase of Mesomycoplasma hyopneumoniae (strain J / ATCC 25934 / NCTC 10110) (Mycoplasma hyopneumoniae).